Here is an 872-residue protein sequence, read N- to C-terminus: Chaperone protein ClpB 2 (872 aa).

The region spanning Pro6–Ser148 is the Clp R domain. Repeat regions lie at residues Phe9–Gln73 and Leu85–Ser148. The segment at Gln161–Gln342 is NBD1. ATP is bound at residue Gly208 to Thr215. Residues Pro343–Gly551 form a linker region. The stretch at Ile393 to Gly527 forms a coiled coil. Residues Glu561–Ser772 form an NBD2 region. ATP is bound at residue Gly611 to Thr618. Positions Leu773–Ser872 are C-terminal.

It belongs to the ClpA/ClpB family. Homohexamer. The oligomerization is ATP-dependent.

It is found in the cytoplasm. In terms of biological role, part of a stress-induced multi-chaperone system, it is involved in the recovery of the cell from heat-induced damage, in cooperation with DnaK, DnaJ and GrpE. Acts before DnaK, in the processing of protein aggregates. Protein binding stimulates the ATPase activity; ATP hydrolysis unfolds the denatured protein aggregates, which probably helps expose new hydrophobic binding sites on the surface of ClpB-bound aggregates, contributing to the solubilization and refolding of denatured protein aggregates by DnaK. This is Chaperone protein ClpB 2 (clpB2) from Nostoc sp. (strain PCC 7120 / SAG 25.82 / UTEX 2576).